Consider the following 1071-residue polypeptide: ATP-dependent helicase/deoxyribonuclease subunit B (1071 aa).

Belongs to the helicase family. AddB/RexB type 2 subfamily. Heterodimer of AddA and RexB. Mg(2+) serves as cofactor.

Its function is as follows. The heterodimer acts as both an ATP-dependent DNA helicase and an ATP-dependent, dual-direction single-stranded exonuclease. Recognizes the chi site generating a DNA molecule suitable for the initiation of homologous recombination. This subunit has 5' -&gt; 3' nuclease activity but not helicase activity. The sequence is that of ATP-dependent helicase/deoxyribonuclease subunit B from Streptococcus pyogenes serotype M12 (strain MGAS9429).